A 374-amino-acid chain; its full sequence is Phosphatidyl-myo-inositol mannosyltransferase (374 aa).

Positions 9 and 16 each coordinate GDP-alpha-D-mannose. Residues Gln18, 62–63 (YN), and Arg68 contribute to the a 1,2-diacyl-sn-glycero-3-phospho-(1D-myo-inositol) site. Residues Arg196, 201–202 (RK), 251–253 (VDD), Lys256, 274–278 (ESFGI), and Glu282 each bind GDP-alpha-D-mannose.

It belongs to the glycosyltransferase group 1 family. Glycosyltransferase 4 subfamily. As to quaternary structure, monomer. Mg(2+) is required as a cofactor.

The protein localises to the cell membrane. The catalysed reaction is a 1,2-diacyl-sn-glycero-3-phospho-(1D-myo-inositol) + GDP-alpha-D-mannose = a 1,2-diacyl-sn-glycero-3-phospho-[alpha-D-mannopyranosyl-(1&lt;-&gt;6)-D-myo-inositol] + GDP + H(+). It functions in the pathway phospholipid metabolism; phosphatidylinositol metabolism. Involved in the biosynthesis of phosphatidyl-myo-inositol mannosides (PIM) which are early precursors in the biosynthesis of lipomannans (LM) and lipoarabinomannans (LAM). Catalyzes the addition of a mannosyl residue from GDP-D-mannose (GDP-Man) to the position 2 of the carrier lipid phosphatidyl-myo-inositol (PI) to generate a phosphatidyl-myo-inositol bearing an alpha-1,2-linked mannose residue (PIM1). The sequence is that of Phosphatidyl-myo-inositol mannosyltransferase from Mycobacterium leprae (strain TN).